The sequence spans 327 residues: HTH-type transcriptional regulator EbgR (327 aa).

The HTH lacI-type domain occupies 1–57 (MATLKDIAIEAGVSLATVSRVLNDDPTLNVKEETKHRILEIAEKLEYKTSSARKLQT). The segment at residues 4-23 (LKDIAIEAGVSLATVSRVLN) is a DNA-binding region (H-T-H motif).

Repressor for beta galactosidase alpha and beta subunits (ebgA and ebgC). Binds lactose as an inducer. The polypeptide is HTH-type transcriptional regulator EbgR (ebgR) (Escherichia coli (strain K12)).